Reading from the N-terminus, the 539-residue chain is MARYARVATLAACLLFACALADGHRWRRQADETAKKDESLEQELCKDKDAGEWFRLVAGEGDNCRDVIQCTASGIQAIRCPAGLFFDIEKQTCDWKDAVKNCKLKNKERKIKPLLYTEEPLCQDGFLACGDSTCIERGLFCNGEKDCGDGSDENSCDIDNDPNRAPPCDSSQCVLPDCFCSEDGTVIPGDLPARDVPQMITITFDDAINNNNIELYKEIFNGKRKNPNGCDIKATYFVSHKYTNYSAVQETHRKGHEIAVHSITHNDDERFWSNATVDDWGKEMAGMRVIIEKFSNITDNSVVGVRAPYLRVGGNNQFTMMEEQAFLYDSTITAPLSNPRLCPYTMYFRMPHRCHGNLQSCPTRSHAVWEMVMNELDRREDPSNDEYLPGCAMVDSCSNILTGDQFYNFLNHNFDRHYEQNRAPLGLYFHAAWLKNNPEFLEAFLYWIDEILQSHNDVYFVTMTQVIQWVQNPRTVTEAKNFEPWREKCSVEGNPACWVPHSCKLTSKEVPGETINLQTCLRCPVNYPWLNDPTGDGHY.

Positions 1–23 (MARYARVATLAACLLFACALADG) are cleaved as a signal peptide. A Chitin-binding type-2 domain is found at 42-104 (QELCKDKDAG…WKDAVKNCKL (63 aa)). Disulfide bonds link Cys-80-Cys-93, Cys-122-Cys-134, Cys-129-Cys-147, Cys-141-Cys-156, Cys-168-Cys-180, and Cys-173-Cys-178. The LDL-receptor class A domain occupies 121-157 (LCQDGFLACGDSTCIERGLFCNGEKDCGDGSDENSCD). Asp-206 lines the Zn(2+) pocket. Disulfide bonds link Cys-230–Cys-489, Cys-354–Cys-361, Cys-391–Cys-397, Cys-497–Cys-520, and Cys-503–Cys-523. N-linked (GlcNAc...) asparagine glycosylation is present at Asn-244. Zn(2+)-binding residues include His-261 and His-265. Asn-296 carries an N-linked (GlcNAc...) asparagine glycan.

It belongs to the carbohydrate esterase 4 (CE4) family. In terms of assembly, interacts with CPAP3-A1. Zn(2+) is required as a cofactor. In terms of tissue distribution, highly expressed in epidermis and head. Moderate expression levels in fat body, Malpighian tubule, testis and midgut. Low expression in silk gland and ovary.

It localises to the secreted. It catalyses the reaction [(1-&gt;4)-N-acetyl-beta-D-glucosaminyl](n) + n H2O = chitosan + n acetate. Its activity is regulated as follows. Binding to the accessory protein CPAP3-A1 is essential for chitinase activity. Functionally, hydrolyzes the N-acetamido groups of N-acetyl-D-glucosamine residues in chitin. The chain is Chitin deacetylase 1 from Bombyx mori (Silk moth).